We begin with the raw amino-acid sequence, 122 residues long: Large ribosomal subunit protein uL14 (122 aa).

It belongs to the universal ribosomal protein uL14 family. As to quaternary structure, part of the 50S ribosomal subunit. Forms a cluster with proteins L3 and L19. In the 70S ribosome, L14 and L19 interact and together make contacts with the 16S rRNA in bridges B5 and B8.

In terms of biological role, binds to 23S rRNA. Forms part of two intersubunit bridges in the 70S ribosome. This is Large ribosomal subunit protein uL14 from Borreliella burgdorferi (strain ATCC 35210 / DSM 4680 / CIP 102532 / B31) (Borrelia burgdorferi).